The chain runs to 1134 residues: MMKSSVKEILESLRLLDSSERSSSLPSPSTFRAPMPLIRQSLPAKFRNAISLESKTIEKEDKDWSTEQITQSAEKEKTGNEVVKISTAQMSRAKNSHDPEWINSAEYFVREKLCVWCRVAANGQWHLGKIHSTSSSDDVCVMLSANDDVRTMEEIFPANPEILEGVEDLTQLSYLNEPSLLYNLRVRYSQDLIYSKAGPVLIAVNPFKNVQIYGEEFLSAYQKNALDAPHVYAVADAAYDDMMREEKNQSIIISGESGAGKTETAKYAMQYLEALGGGSFGVENEILKTNCILEAFGNAKTSRNDNSSRFGKLMEIHFSAKGKICGAKLETFSLDQSRVAQLCNGERCYHIFYQLCAGASPILKERLKIKAASEYNYLNQSNCLTIDRTDDAQKFHKLMEAFNIVQIPQEYQERTFALLAAVLWLGNVSFEVIDNENHVEVVADEAVTNVAMLMGCNSKKLMVVLSTCKLQAGRDCIAKRLTLRQATDMRDSLAKIIYASLFNWLVEQINISLEVGNSRTGRSISILDIYGFESFKDNSFEQFCINYANERLQQHFNRHLFKLEQEEYEGDGIDWTKVEFIDNQECLNLIEKKPIGLVSLLNEESNFPKATDTTFANKLKQHLNANSCFKGERGRGFRIKHYAGEVLYNTNGFLEKNRDPLHVDLIQLLSLCKCQLLNLFSTKMHHDFLKPATFSDSMNQSVIAKFKGQLFKLMNKLEDTTPHFIRCIKPNSNQLPGLYEENHVLQQLRCCGVLEIVRISRSGYPTRLTHQELAVRYGCLLLDTRISQDPLSTSKAILKQCNLPPEMYQVGYTKIYLRTGVISVLEERKKYVLRGILGLQKQFRGYQTREYFHNMRNAAVILQSYIRGENARRNYIVVGESAIVSTAITKELDAAIHLQYMVRKWLARKLLNSTQQKNKPRNEKKKTRRKSTKRVSEDKELLSEQFEVQPCVLADLQSRVLKVEAAIMQKEDENTALQEELQRFEERWLENETRMKSMEDTWQKHMSSMQMSLAAACKVLAPDKTASHGTDSEDTMSFGTPTKELKGSLSDVNNLSTEFDQRSVIIHEDPKSLVEVKSDSISNRKQHAEELRRLKSRFEKWKKDYKTRLRETKARVRLNGDEGRHRNWWCKKSY.

The region spanning 110 to 160 is the Myosin N-terminal SH3-like domain; sequence REKLCVWCRVAANGQWHLGKIHSTSSSDDVCVMLSANDDVRTMEEIFPANP. In terms of domain architecture, Myosin motor spans 164-830; that stretch reads EGVEDLTQLS…VISVLEERKK (667 aa). Residues 255-262 and 304-312 each bind ATP; these read GESGAGKT and NDNSSRFGK. Actin-binding stretches follow at residues 589–623 and 710–732; these read LIEKKPIGLVSLLNEESNFPKATDTTFANKLKQHL and LFKLMNKLEDTTPHFIRCIKPNS. 3 IQ domains span residues 832–861, 855–884, and 891–920; these read VLRGILGLQKQFRGYQTREYFHNMRNAAVI, MRNAAVILQSYIRGENARRNYIVVGESAIV, and ELDAAIHLQYMVRKWLARKLLNSTQQKNKP. The interval 913 to 939 is disordered; sequence STQQKNKPRNEKKKTRRKSTKRVSEDK. Residues 918–933 show a composition bias toward basic residues; that stretch reads NKPRNEKKKTRRKSTK. Residues 953-999 adopt a coiled-coil conformation; the sequence is LADLQSRVLKVEAAIMQKEDENTALQEELQRFEERWLENETRMKSME.

It belongs to the TRAFAC class myosin-kinesin ATPase superfamily. Myosin family. Plant myosin class VIII subfamily. In terms of assembly, homodimer.

Myosin heavy chain that is required for the cell cycle-regulated transport of various organelles and proteins for their segregation. Functions by binding with its tail domain to receptor proteins on organelles and exerting force with its N-terminal motor domain against actin filaments, thereby transporting its cargo along polarized actin cables. The polypeptide is Myosin-4 (VIII-B) (Arabidopsis thaliana (Mouse-ear cress)).